The following is a 118-amino-acid chain: Large ribosomal subunit protein uL24 (118 aa).

Belongs to the universal ribosomal protein uL24 family. Part of the 50S ribosomal subunit.

In terms of biological role, one of two assembly initiator proteins, it binds directly to the 5'-end of the 23S rRNA, where it nucleates assembly of the 50S subunit. Functionally, one of the proteins that surrounds the polypeptide exit tunnel on the outside of the subunit. The chain is Large ribosomal subunit protein uL24 from Prochlorococcus marinus subsp. pastoris (strain CCMP1986 / NIES-2087 / MED4).